We begin with the raw amino-acid sequence, 91 residues long: PqqA binding protein 1 (91 aa).

Belongs to the PqqD family. In terms of assembly, monomer. Interacts with PqqE.

It participates in cofactor biosynthesis; pyrroloquinoline quinone biosynthesis. Functions as a PqqA binding protein and presents PqqA to PqqE, in the pyrroloquinoline quinone (PQQ) biosynthetic pathway. The chain is PqqA binding protein 1 (pqqD1) from Pseudomonas putida (strain ATCC 47054 / DSM 6125 / CFBP 8728 / NCIMB 11950 / KT2440).